Here is a 688-residue protein sequence, read N- to C-terminus: UvrABC system protein B (688 aa).

A Helicase ATP-binding domain is found at 31–188; it reads GRVNAGEPDV…RKFVSMQYQR (158 aa). ATP is bound at residue 44-51; sequence GATGTGKS. Positions 97–120 match the Beta-hairpin motif; the sequence is YYDYYQPEAYVPQTDTFIEKDSSV. The 154-residue stretch at 434 to 587 folds into the Helicase C-terminal domain; it reads QIDDLLEQIR…QVAYNTEHGI (154 aa). Positions 607 to 632 are disordered; it reads GEDTKKMLEGRGGGKRSPTPNLRREG. The 36-residue stretch at 642 to 677 folds into the UVR domain; sequence ETIISDLNDQMLQAAGELKFELAARLRDELGDLKRE.

The protein belongs to the UvrB family. In terms of assembly, forms a heterotetramer with UvrA during the search for lesions. Interacts with UvrC in an incision complex.

Its subcellular location is the cytoplasm. Functionally, the UvrABC repair system catalyzes the recognition and processing of DNA lesions. A damage recognition complex composed of 2 UvrA and 2 UvrB subunits scans DNA for abnormalities. Upon binding of the UvrA(2)B(2) complex to a putative damaged site, the DNA wraps around one UvrB monomer. DNA wrap is dependent on ATP binding by UvrB and probably causes local melting of the DNA helix, facilitating insertion of UvrB beta-hairpin between the DNA strands. Then UvrB probes one DNA strand for the presence of a lesion. If a lesion is found the UvrA subunits dissociate and the UvrB-DNA preincision complex is formed. This complex is subsequently bound by UvrC and the second UvrB is released. If no lesion is found, the DNA wraps around the other UvrB subunit that will check the other stand for damage. The polypeptide is UvrABC system protein B (Clavibacter michiganensis subsp. michiganensis (strain NCPPB 382)).